The chain runs to 507 residues: Nuclear distribution protein PAC1 (507 aa).

Positions 72-98 form a coiled coil; it reads STVLRLQRKIMDLTDEVSNLKTIIEAK. 7 WD repeats span residues 125 to 164, 170 to 222, 225 to 265, 268 to 312, 315 to 389, 410 to 449, and 474 to 507; these read QTHQ…PSIP, AHSR…QIRI, GHDH…CTRT, GHSD…GLCL, GHSH…VRPN, GHQS…TGGR, and PKDT…RLWS.

Belongs to the WD repeat LIS1/nudF family. As to quaternary structure, self-associates. Interacts with NDL1 and dynein.

It localises to the cytoplasm. Its subcellular location is the cytoskeleton. The protein localises to the spindle pole. In terms of biological role, positively regulates the activity of the minus-end directed microtubule motor protein dynein. Plays a central role in positioning the mitotic spindle at the bud neck during cell division. Targets cytoplasmic dynein to microtubule plus ends, thereby promoting dynein-mediated microtubule sliding along the bud cortex and consequently the movement of the mitotic spindle to the bud neck. The sequence is that of Nuclear distribution protein PAC1 from Meyerozyma guilliermondii (strain ATCC 6260 / CBS 566 / DSM 6381 / JCM 1539 / NBRC 10279 / NRRL Y-324) (Yeast).